The following is a 251-amino-acid chain: Membrane-anchored junction protein (251 aa).

Over 1–227 (MSLKPFTYPF…HSNPPPLKEP (227 aa)) the chain is Nuclear. The disordered stretch occupies residues 140 to 225 (RKRKLMEEPS…LEHSNPPPLK (86 aa)). The segment covering 183-198 (EDSQQDTPASDSTAVT) has biased composition (polar residues). A helical transmembrane segment spans residues 228-246 (AARGFLGFLSALFPFRYFF). Residues 247–251 (RKSTQ) lie on the Perinuclear space side of the membrane.

Belongs to the MAJIN family. In terms of assembly, component of the MAJIN-TERB1-TERB2 complex, composed of MAJIN, TERB1 and TERB2.

The protein resides in the nucleus inner membrane. The protein localises to the chromosome. It is found in the telomere. Meiosis-specific telomere-associated protein involved in meiotic telomere attachment to the nucleus inner membrane, a crucial step for homologous pairing and synapsis. Component of the MAJIN-TERB1-TERB2 complex, which promotes telomere cap exchange by mediating attachment of telomeric DNA to the inner nuclear membrane and replacement of the protective cap of telomeric chromosomes: in early meiosis, the MAJIN-TERB1-TERB2 complex associates with telomeric DNA and the shelterin/telosome complex. During prophase, the complex matures and promotes release of the shelterin/telosome complex from telomeric DNA. In the complex, MAJIN acts as the anchoring subunit to the nucleus inner membrane. MAJIN shows DNA-binding activity, possibly for the stabilization of telomere attachment on the nucleus inner membrane. The sequence is that of Membrane-anchored junction protein from Rattus norvegicus (Rat).